The primary structure comprises 51 residues: UPF0181 protein VV2_0310 (51 aa).

This sequence belongs to the UPF0181 family.

The chain is UPF0181 protein VV2_0310 from Vibrio vulnificus (strain CMCP6).